The primary structure comprises 358 residues: MSQCQIWVRHHLCCSFQIPTLAASLFQLGRCRSVKEFEKLNRIGEGTYGIVYRARDTQTDEIVALKKVRMDKEKDGIPISSLREITLLLRLRHPNIVELKEVVVGNHLESIFLVMGYCEQDLASLLENMPTPFSEAQVKCILLQVLRGLQYLHRSFIIHRDLKVSNLLMTDKGCVKTADFGLARAYGVPVKPMTPKVVTLWYRAPELLLGTTTQTTSIDMWAVGCILAELLAHKPLLPGTSEIHQIDLIVQLLGTPSENIWPGFSKLPLAGQYSLRKQPYNNLKHKFPWLSEAGLRLLNFLFMYDPKKRATAGDCLESSYFKEKPLPCEPELMPTFPHHRNKRAAPAATEGQSKRCRP.

Residues 37-321 form the Protein kinase domain; sequence FEKLNRIGEG…AGDCLESSYF (285 aa). Residues 43–51 and lysine 66 contribute to the ATP site; that span reads IGEGTYGIV. The active-site Proton acceptor is the aspartate 161. Threonine 194 bears the Phosphothreonine mark. The disordered stretch occupies residues 332–358; it reads LMPTFPHHRNKRAAPAATEGQSKRCRP.

The protein belongs to the protein kinase superfamily. CMGC Ser/Thr protein kinase family. CDC2/CDKX subfamily. As to quaternary structure, heterodimer with CCNQ, the interaction is required for kinase activity. Interacts with ETS2. Interacts with PRK2.

Its subcellular location is the cytoplasm. The protein resides in the cytoskeleton. The protein localises to the cilium basal body. It catalyses the reaction L-seryl-[protein] + ATP = O-phospho-L-seryl-[protein] + ADP + H(+). It carries out the reaction L-threonyl-[protein] + ATP = O-phospho-L-threonyl-[protein] + ADP + H(+). In terms of biological role, cyclin-dependent kinase that phosphorylates the transcription factor ETS2 (in vitro) and positively controls its proteasomal degradation (in cells). Involved in the regulation of actin cytoskeleton organization through the phosphorylation of actin dynamics regulators such as PKN2. Is a negative regulator of ciliogenesis through phosphorylation of PKN2 and promotion of RhoA signaling. This Rattus norvegicus (Rat) protein is Cyclin-dependent kinase 10 (Cdk10).